We begin with the raw amino-acid sequence, 465 residues long: Alpha-2A adrenergic receptor (465 aa).

The Extracellular portion of the chain corresponds to 1–48 (MFRQEQPLAEGSFAPMGSLQPDAGNSSWNGTEAPGGGTRATPYSLQVT). Asn-25 and Asn-29 each carry an N-linked (GlcNAc...) asparagine glycan. A helical membrane pass occupies residues 49–74 (LTLVCLAGLLMLFTVFGNVLVIIAVF). The Cytoplasmic segment spans residues 75 to 85 (TSRALKAPQNL). A helical transmembrane segment spans residues 86-111 (FLVSLASADILVATLVIPFSLANEVM). The Extracellular segment spans residues 112–121 (GYWYFGKVWC). Cys-121 and Cys-203 are joined by a disulfide. Residues 122–144 (EIYLALDVLFCTSSIVHLCAISL) traverse the membrane as a helical segment. Over 145 to 164 (DRYWSITQAIEYNLKRTPRR) the chain is Cytoplasmic. A helical transmembrane segment spans residues 165–188 (IKAIIVTVWVISAVISFPPLISIE). The Extracellular portion of the chain corresponds to 189–207 (KKGAGGGQQPAEPSCKIND). The helical transmembrane segment at 208–232 (QKWYVISSSIGSFFAPCLIMILVYV) threads the bilayer. Residues 233-389 (RIYQIAKRRT…RQNREKRFTF (157 aa)) are Cytoplasmic-facing. Positions 242–377 (TRVPPSRRGP…RAGGAKASRW (136 aa)) are disordered. A compositionally biased stretch (basic and acidic residues) spans 313-330 (SSEHAERPQGPGKPERGP). Phosphoserine is present on Ser-346. The span at 353–364 (GAAGPGASGSGQ) shows a compositional bias: gly residues. The residue at position 368 (Arg-368) is an Omega-N-methylarginine. A helical membrane pass occupies residues 390–414 (VLAVVIGVFVVCWFPFFFTYTLIAV). The Extracellular portion of the chain corresponds to 415–424 (GCPVPYQLFN). A helical transmembrane segment spans residues 425-445 (FFFWFGYCNSSLNPVIYTIFN). The Cytoplasmic portion of the chain corresponds to 446 to 465 (HDFRRAFKKILCRGDRKRIV). Cys-457 carries the S-palmitoyl cysteine lipid modification.

It belongs to the G-protein coupled receptor 1 family. Adrenergic receptor subfamily. ADRA2A sub-subfamily. Expressed in brain.

The protein localises to the cell membrane. Functionally, alpha-2 adrenergic receptors mediate the catecholamine-induced inhibition of adenylate cyclase through the action of G proteins. The protein is Alpha-2A adrenergic receptor of Rattus norvegicus (Rat).